A 213-amino-acid chain; its full sequence is Lysozyme g-like protein 2 (213 aa).

The signal sequence occupies residues 1 to 19 (MVPSVVFWGLIALVGTAKG). Cystine bridges form between Cys-40–Cys-93 and Cys-54–Cys-62. Glu-106 is an active-site residue.

Belongs to the glycosyl hydrolase 23 family.

The protein localises to the secreted. Its function is as follows. May act as a potent antibacterial protein that may play a role in the innate immunity. The polypeptide is Lysozyme g-like protein 2 (Lyg2) (Mus musculus (Mouse)).